Consider the following 102-residue polypeptide: Large ribosomal subunit protein uL24 (102 aa).

This sequence belongs to the universal ribosomal protein uL24 family. Part of the 50S ribosomal subunit.

Functionally, one of two assembly initiator proteins, it binds directly to the 5'-end of the 23S rRNA, where it nucleates assembly of the 50S subunit. One of the proteins that surrounds the polypeptide exit tunnel on the outside of the subunit. This is Large ribosomal subunit protein uL24 from Limosilactobacillus fermentum (strain NBRC 3956 / LMG 18251) (Lactobacillus fermentum).